The sequence spans 103 residues: UPF0145 protein BCE33L0904 (103 aa).

It belongs to the UPF0145 family.

This chain is UPF0145 protein BCE33L0904, found in Bacillus cereus (strain ZK / E33L).